The primary structure comprises 52 residues: Large ribosomal subunit protein bL32c (52 aa).

The protein belongs to the bacterial ribosomal protein bL32 family.

Its subcellular location is the plastid. It is found in the chloroplast. This Lobularia maritima (Sweet alyssum) protein is Large ribosomal subunit protein bL32c.